The following is a 46-amino-acid chain: Photosystem II reaction center protein K (46 aa).

Residues M1–A9 constitute a propeptide that is removed on maturation. The Lumenal portion of the chain corresponds to K10–D19. The chain crosses the membrane as a helical span at residues P20 to W39. The Cytoplasmic portion of the chain corresponds to Q40 to R46.

Belongs to the PsbK family. PSII is composed of 1 copy each of membrane proteins PsbA, PsbB, PsbC, PsbD, PsbE, PsbF, PsbH, PsbI, PsbJ, PsbK, PsbL, PsbM, PsbT, PsbX, PsbY, PsbZ, Psb30/Ycf12, peripheral proteins PsbO, CyanoQ(PsbQ), PsbU, PsbV and a large number of cofactors. It forms dimeric complexes. Part of a photosystem II (PSII) assembly intermediate complex PSII-I; crystallized from a strain deleted of psbJ, it forms monomeric PSII before addition of the oxygen evolving complex. PSII-I includes 3 assembly factors not found in mature PSII (Psb27, Psb28 and Psb34). It depends on PSII binds multiple chlorophylls, carotenoids and specific lipids. as a cofactor.

The protein resides in the cellular thylakoid membrane. One of the components of the core complex of photosystem II (PSII). PSII is a light-driven water:plastoquinone oxidoreductase that uses light energy to abstract electrons from H(2)O, generating O(2) and a proton gradient subsequently used for ATP formation. It consists of a core antenna complex that captures photons, and an electron transfer chain that converts photonic excitation into a charge separation. Required for association of PsbZ and Psb30/Ycf12 with PSII. In Thermosynechococcus vestitus (strain NIES-2133 / IAM M-273 / BP-1), this protein is Photosystem II reaction center protein K.